The primary structure comprises 37 residues: Cytochrome b6-f complex subunit 5 (37 aa).

A helical membrane pass occupies residues 5 to 25; it reads LLSGIVLGLIPITLAGLFVTA.

Belongs to the PetG family. In terms of assembly, the 4 large subunits of the cytochrome b6-f complex are cytochrome b6, subunit IV (17 kDa polypeptide, PetD), cytochrome f and the Rieske protein, while the 4 small subunits are PetG, PetL, PetM and PetN. The complex functions as a dimer.

It is found in the plastid. It localises to the chloroplast thylakoid membrane. Component of the cytochrome b6-f complex, which mediates electron transfer between photosystem II (PSII) and photosystem I (PSI), cyclic electron flow around PSI, and state transitions. PetG is required for either the stability or assembly of the cytochrome b6-f complex. The chain is Cytochrome b6-f complex subunit 5 from Chaetosphaeridium globosum (Charophycean green alga).